The sequence spans 245 residues: Balbiani ring A 28 kDa protein (245 aa).

Positions 1–16 are cleaved as a signal peptide; that stretch reads MKSIIKHILFVVLLIS. A phosphoserine mark is found at S33, S40, S92, S93, and S115.

Salivary gland.

Its subcellular location is the secreted. Used by the larvae to construct a supramolecular structure, the larval tube. This chain is Balbiani ring A 28 kDa protein, found in Chironomus thummi thummi (Midge).